Reading from the N-terminus, the 514-residue chain is Probable cytosol aminopeptidase (514 aa).

Mn(2+)-binding residues include K266 and D271. The active site involves K278. Residues D289, D357, and E359 each coordinate Mn(2+). The active site involves R361.

It belongs to the peptidase M17 family. Mn(2+) serves as cofactor.

The protein localises to the cytoplasm. The catalysed reaction is Release of an N-terminal amino acid, Xaa-|-Yaa-, in which Xaa is preferably Leu, but may be other amino acids including Pro although not Arg or Lys, and Yaa may be Pro. Amino acid amides and methyl esters are also readily hydrolyzed, but rates on arylamides are exceedingly low.. The enzyme catalyses Release of an N-terminal amino acid, preferentially leucine, but not glutamic or aspartic acids.. In terms of biological role, presumably involved in the processing and regular turnover of intracellular proteins. Catalyzes the removal of unsubstituted N-terminal amino acids from various peptides. The chain is Probable cytosol aminopeptidase from Oleidesulfovibrio alaskensis (strain ATCC BAA-1058 / DSM 17464 / G20) (Desulfovibrio alaskensis).